We begin with the raw amino-acid sequence, 30 residues long: Kalata-B10 (30 aa).

The cyclopeptide (Gly-Asp) cross-link spans 1–30 (GLPTCGETCFGGTCNTPGCSCSSWPICTRD). 3 disulfides stabilise this stretch: Cys-5-Cys-19, Cys-9-Cys-21, and Cys-14-Cys-27.

It belongs to the cyclotide family. Moebius subfamily. Post-translationally, this peptide occurs in both cyclic and linear forms. The linear form contains unmodified Trp-24, the cyclic peptide occurs in two forms with unmodified Trp-24, and with Trp-24 oxidized to form oxindolylalanine. Oxidation is enhanced by exposure to sunlight.

In terms of biological role, probably participates in a plant defense mechanism. The chain is Kalata-B10 from Oldenlandia affinis.